The primary structure comprises 172 residues: Large ribosomal subunit protein uL10 (172 aa).

This sequence belongs to the universal ribosomal protein uL10 family. In terms of assembly, part of the ribosomal stalk of the 50S ribosomal subunit. The N-terminus interacts with L11 and the large rRNA to form the base of the stalk. The C-terminus forms an elongated spine to which L12 dimers bind in a sequential fashion forming a multimeric L10(L12)X complex.

Functionally, forms part of the ribosomal stalk, playing a central role in the interaction of the ribosome with GTP-bound translation factors. This is Large ribosomal subunit protein uL10 from Brucella suis biovar 1 (strain 1330).